Here is a 1056-residue protein sequence, read N- to C-terminus: Carbamoyl phosphate synthase large chain (1056 aa).

Positions 1 to 401 are carboxyphosphate synthetic domain; that stretch reads MPKRTDIHKI…ALHKAVRSLE (401 aa). Residues Arg-129, Arg-169, Gly-175, Gly-176, Lys-208, Ile-210, Glu-215, Gly-241, Ile-242, His-243, Gln-284, and Glu-298 each contribute to the ATP site. In terms of domain architecture, ATP-grasp 1 spans 133 to 327; that stretch reads KELMNELGEP…IAKMAAKIAV (195 aa). The Mg(2+) site is built by Gln-284, Glu-298, and Asn-300. Positions 284, 298, and 300 each coordinate Mn(2+). An oligomerization domain region spans residues 402–546; it reads IDEKDLFSAE…YSAYDHENES (145 aa). The tract at residues 547 to 929 is carbamoyl phosphate synthetic domain; that stretch reads QRTKKPSILV…ALHKAFSGAH (383 aa). Residues 671–861 enclose the ATP-grasp 2 domain; it reads DQVITDLNLK…MAQVATRVIL (191 aa). ATP-binding residues include Arg-707, Ala-746, Leu-748, Glu-752, Gly-777, Val-778, His-779, Ser-780, Gln-820, and Glu-832. Mg(2+)-binding residues include Gln-820, Glu-832, and Asn-834. Mn(2+)-binding residues include Gln-820, Glu-832, and Asn-834. Residues 930–1056 enclose the MGS-like domain; the sequence is IQVPNDGKIL…DQSLEAITIK (127 aa). Residues 930-1056 are allosteric domain; sequence IQVPNDGKIL…DQSLEAITIK (127 aa).

The protein belongs to the CarB family. As to quaternary structure, composed of two chains; the small (or glutamine) chain promotes the hydrolysis of glutamine to ammonia, which is used by the large (or ammonia) chain to synthesize carbamoyl phosphate. Tetramer of heterodimers (alpha,beta)4. It depends on Mg(2+) as a cofactor. The cofactor is Mn(2+).

The enzyme catalyses hydrogencarbonate + L-glutamine + 2 ATP + H2O = carbamoyl phosphate + L-glutamate + 2 ADP + phosphate + 2 H(+). It catalyses the reaction hydrogencarbonate + NH4(+) + 2 ATP = carbamoyl phosphate + 2 ADP + phosphate + 2 H(+). Its pathway is amino-acid biosynthesis; L-arginine biosynthesis; carbamoyl phosphate from bicarbonate: step 1/1. It participates in pyrimidine metabolism; UMP biosynthesis via de novo pathway; (S)-dihydroorotate from bicarbonate: step 1/3. In terms of biological role, large subunit of the glutamine-dependent carbamoyl phosphate synthetase (CPSase). CPSase catalyzes the formation of carbamoyl phosphate from the ammonia moiety of glutamine, carbonate, and phosphate donated by ATP, constituting the first step of 2 biosynthetic pathways, one leading to arginine and/or urea and the other to pyrimidine nucleotides. The large subunit (synthetase) binds the substrates ammonia (free or transferred from glutamine from the small subunit), hydrogencarbonate and ATP and carries out an ATP-coupled ligase reaction, activating hydrogencarbonate by forming carboxy phosphate which reacts with ammonia to form carbamoyl phosphate. The sequence is that of Carbamoyl phosphate synthase large chain from Limosilactobacillus reuteri (strain DSM 20016) (Lactobacillus reuteri).